Reading from the N-terminus, the 355-residue chain is Protein RecA (355 aa).

67-74 (GPESSGKT) lines the ATP pocket.

Belongs to the RecA family.

The protein resides in the cytoplasm. Can catalyze the hydrolysis of ATP in the presence of single-stranded DNA, the ATP-dependent uptake of single-stranded DNA by duplex DNA, and the ATP-dependent hybridization of homologous single-stranded DNAs. It interacts with LexA causing its activation and leading to its autocatalytic cleavage. This is Protein RecA from Histophilus somni (strain 2336) (Haemophilus somnus).